Consider the following 172-residue polypeptide: uncharacterized protein (172 aa).

The N-terminal stretch at M1–A29 is a signal peptide. SH3b domains are found at residues S42–A105 and K112–R172.

This is an uncharacterized protein from Bacillus subtilis (strain 168).